Reading from the N-terminus, the 333-residue chain is Holliday junction branch migration complex subunit RuvB (333 aa).

The interval 1 to 182 (MEERLVSGDV…FGVISRLEYY (182 aa)) is large ATPase domain (RuvB-L). Residues leucine 21, arginine 22, glycine 63, lysine 66, threonine 67, threonine 68, 129-131 (EDY), arginine 172, tyrosine 182, and arginine 219 each bind ATP. Mg(2+) is bound at residue threonine 67. The small ATPAse domain (RuvB-S) stretch occupies residues 183–253 (TTEHLTQIVM…LAKEALELLQ (71 aa)). Positions 256-333 (RLGLDHIDHK…EHFGMEVPKQ (78 aa)) are head domain (RuvB-H). DNA is bound by residues arginine 311 and arginine 316.

Belongs to the RuvB family. Homohexamer. Forms an RuvA(8)-RuvB(12)-Holliday junction (HJ) complex. HJ DNA is sandwiched between 2 RuvA tetramers; dsDNA enters through RuvA and exits via RuvB. An RuvB hexamer assembles on each DNA strand where it exits the tetramer. Each RuvB hexamer is contacted by two RuvA subunits (via domain III) on 2 adjacent RuvB subunits; this complex drives branch migration. In the full resolvosome a probable DNA-RuvA(4)-RuvB(12)-RuvC(2) complex forms which resolves the HJ.

It localises to the cytoplasm. The catalysed reaction is ATP + H2O = ADP + phosphate + H(+). Functionally, the RuvA-RuvB-RuvC complex processes Holliday junction (HJ) DNA during genetic recombination and DNA repair, while the RuvA-RuvB complex plays an important role in the rescue of blocked DNA replication forks via replication fork reversal (RFR). RuvA specifically binds to HJ cruciform DNA, conferring on it an open structure. The RuvB hexamer acts as an ATP-dependent pump, pulling dsDNA into and through the RuvAB complex. RuvB forms 2 homohexamers on either side of HJ DNA bound by 1 or 2 RuvA tetramers; 4 subunits per hexamer contact DNA at a time. Coordinated motions by a converter formed by DNA-disengaged RuvB subunits stimulates ATP hydrolysis and nucleotide exchange. Immobilization of the converter enables RuvB to convert the ATP-contained energy into a lever motion, pulling 2 nucleotides of DNA out of the RuvA tetramer per ATP hydrolyzed, thus driving DNA branch migration. The RuvB motors rotate together with the DNA substrate, which together with the progressing nucleotide cycle form the mechanistic basis for DNA recombination by continuous HJ branch migration. Branch migration allows RuvC to scan DNA until it finds its consensus sequence, where it cleaves and resolves cruciform DNA. The chain is Holliday junction branch migration complex subunit RuvB from Geobacillus sp. (strain WCH70).